The primary structure comprises 182 residues: MAHCDFVTNSLIQNATATLHTNRGDIKVALFGNHVPKTVANFVGLAQGTKEYSTQNASGGPSGPFYDGAVFHRVIQGFMIQGGDPTGTGRGGPGYKFADEFHPELQFDKPYLLAMANAGPGTNGSQFFITVGETPHLNRRHTIFGEVTDPDSQKVVDAISTTATDGNDRPTEPVVIDSITIS.

The PPIase cyclophilin-type domain maps to 13-181 (QNATATLHTN…EPVVIDSITI (169 aa)). The disordered stretch occupies residues 161–182 (TTATDGNDRPTEPVVIDSITIS).

The protein belongs to the cyclophilin-type PPIase family.

The protein resides in the cytoplasm. It catalyses the reaction [protein]-peptidylproline (omega=180) = [protein]-peptidylproline (omega=0). PPIases accelerate the folding of proteins. It catalyzes the cis-trans isomerization of proline imidic peptide bonds in oligopeptides. This is Probable peptidyl-prolyl cis-trans isomerase A (ppiA) from Mycobacterium leprae (strain TN).